The following is a 261-amino-acid chain: Ribosomal RNA small subunit methyltransferase G (261 aa).

Residues G94, L99, 117–119 (EST), 145–146 (VE), and R164 contribute to the S-adenosyl-L-methionine site.

It belongs to the methyltransferase superfamily. RNA methyltransferase RsmG family.

The protein resides in the cytoplasm. Its function is as follows. Specifically methylates the N7 position of a guanine in 16S rRNA. This is Ribosomal RNA small subunit methyltransferase G from Rubrobacter xylanophilus (strain DSM 9941 / JCM 11954 / NBRC 16129 / PRD-1).